Consider the following 94-residue polypeptide: Acylphosphatase (94 aa).

Positions 8 to 94 (TVHVIVKGKV…EKRYKHFAQL (87 aa)) constitute an Acylphosphatase-like domain. Catalysis depends on residues R23 and N41.

It belongs to the acylphosphatase family.

It catalyses the reaction an acyl phosphate + H2O = a carboxylate + phosphate + H(+). The polypeptide is Acylphosphatase (acyP) (Bordetella parapertussis (strain 12822 / ATCC BAA-587 / NCTC 13253)).